Consider the following 248-residue polypeptide: DNA repair protein RecO (248 aa).

The protein belongs to the RecO family.

Functionally, involved in DNA repair and RecF pathway recombination. In Bacillus mycoides (strain KBAB4) (Bacillus weihenstephanensis), this protein is DNA repair protein RecO.